Reading from the N-terminus, the 284-residue chain is MPAQLLDGNALSKKLRAEIAARAAIVTAKGVRPGLAVIVVGDNPASQVYVRNKVKACEDVGFHSVLEPYPAELGEEELLARIATLNADPAIHGILVQLPLPEHIAAERVLEAIAPEKDVDGFHVSNAGALMVGKPEFIPCTPYGCMKLLESIEYPIRGARAVIVGASNIVGKPMAMLLLQAGATVTICNSKTRDLAHHTKDADILVVATGKPKMVSGDMIKNGAVVIDVGINRLPDGKLCGDVDFDAAKYVAGWITPVPGGVGPMTITMLLMNTLEAAEKASKP.

NADP(+)-binding positions include 165 to 167 (GAS), serine 190, and isoleucine 231.

This sequence belongs to the tetrahydrofolate dehydrogenase/cyclohydrolase family. Homodimer.

It catalyses the reaction (6R)-5,10-methylene-5,6,7,8-tetrahydrofolate + NADP(+) = (6R)-5,10-methenyltetrahydrofolate + NADPH. It carries out the reaction (6R)-5,10-methenyltetrahydrofolate + H2O = (6R)-10-formyltetrahydrofolate + H(+). It participates in one-carbon metabolism; tetrahydrofolate interconversion. Catalyzes the oxidation of 5,10-methylenetetrahydrofolate to 5,10-methenyltetrahydrofolate and then the hydrolysis of 5,10-methenyltetrahydrofolate to 10-formyltetrahydrofolate. The chain is Bifunctional protein FolD from Polynucleobacter asymbioticus (strain DSM 18221 / CIP 109841 / QLW-P1DMWA-1) (Polynucleobacter necessarius subsp. asymbioticus).